The primary structure comprises 363 residues: U-box domain-containing protein 62 (363 aa).

A disordered region spans residues 74 to 117; that stretch reads KPIIGNPNDSGGSDGEDDVDVEEEDEDDDLDGNEGDIGMNKDAG. A compositionally biased stretch (acidic residues) spans 87 to 107; it reads DGEDDVDVEEEDEDDDLDGNE. The 73-residue stretch at 181–253 folds into the U-box domain; the sequence is SLRTILSDPT…QAFCREENSQ (73 aa). Residues 343–363 are disordered; sequence AKAPEDPSAKATPNKMVSNWL.

The catalysed reaction is S-ubiquitinyl-[E2 ubiquitin-conjugating enzyme]-L-cysteine + [acceptor protein]-L-lysine = [E2 ubiquitin-conjugating enzyme]-L-cysteine + N(6)-ubiquitinyl-[acceptor protein]-L-lysine.. Its pathway is protein modification; protein ubiquitination. In terms of biological role, functions as an E3 ubiquitin ligase. This Arabidopsis thaliana (Mouse-ear cress) protein is U-box domain-containing protein 62 (PUB62).